The primary structure comprises 203 residues: tRNA (guanine-N(7)-)-methyltransferase (203 aa).

Positions 34, 59, 86, and 107 each coordinate S-adenosyl-L-methionine. Residue aspartate 107 is part of the active site. Substrate-binding positions include lysine 111, aspartate 143, and 181–184 (TSYE).

This sequence belongs to the class I-like SAM-binding methyltransferase superfamily. TrmB family.

The enzyme catalyses guanosine(46) in tRNA + S-adenosyl-L-methionine = N(7)-methylguanosine(46) in tRNA + S-adenosyl-L-homocysteine. The protein operates within tRNA modification; N(7)-methylguanine-tRNA biosynthesis. Its function is as follows. Catalyzes the formation of N(7)-methylguanine at position 46 (m7G46) in tRNA. The polypeptide is tRNA (guanine-N(7)-)-methyltransferase (Mycoplasmopsis pulmonis (strain UAB CTIP) (Mycoplasma pulmonis)).